A 112-amino-acid polypeptide reads, in one-letter code: MEMPPCALGLFCFCSSCFCLCCPRHRPVSRLAVAAGKRGAAVVSGVTGLILSPSPSPIFIQPTPSHLTFQPPPGLELALGSQSVHSAPLGVTSPSAPPLPPVVDLPQLGLRR.

Hydrophobic stretches follow at residues 7 to 23 (ALGL…LCCP) and 40 to 60 (AAVV…PIFI). Residues 28–66 (VSRLAVAAGKRGAAVVSGVTGLILSPSPSPIFIQPTPSH) form an interaction with host HPX region. A homodimerization, and interaction with host AMBP/bikunin region spans residues 70–112 (QPPPGLELALGSQSVHSAPLGVTSPSAPPLPPVVDLPQLGLRR). Positions 89 to 112 (LGVTSPSAPPLPPVVDLPQLGLRR) are disordered. The interval 93–102 (SPSAPPLPPV) is interaction with host SRC, HCK, FYN, PIK3R3 and GRB2. The PTAP/PSAP motif signature appears at 94 to 97 (PSAP).

The protein belongs to the hepevirus ORF3 protein family. In terms of assembly, forms homooligomers. Interacts with host SRC, HCK, FYN, PIK3R3 and GRB2 (via SH3 domain); binding does not activate the kinases. Interacts with host AMBP/bikunin and AMBP/alpha-1-microglobulin peptides. Interacts with host HPX/hemopexin. Interacts (when phosphorylated) with capsid protein ORF2. Interacts with host TSG101; this interaction plays a role in viral release from the host cell. Interacts with host SIRPA; this interaction down-regulates the phosphorylation of host IRF3. Palmitoylated in the N-terminus.

Its subcellular location is the host endoplasmic reticulum membrane. The protein resides in the host cytoplasm. It is found in the host cytoskeleton. The protein localises to the virion. It localises to the host cell membrane. Small multifunctional phosphoprotein involved in virion morphogenesis, egress and counteracting host innate immunity. Plays critical roles in the final steps of viral release by interacting with host TSG101, a member of the vacuolar protein-sorting pathway and using other cellular host proteins involved in vesicle formation pathway. Also acts as a viroporin and forms ion conductive pores allowing viral particle release. Impairs the generation of type I interferon by down-regulating host TLR3 and TLR7 as well as their downstream signaling pathways. Down-regulates the phosphorylation of host IRF3 via the interaction with host SIRP-alpha, thereby inhibiting IFN-I expression. Interacts with host microtubules. In Bandicota bengalensis (lesser bandicoot rat), this protein is Protein ORF3.